We begin with the raw amino-acid sequence, 205 residues long: Large ribosomal subunit protein uL4 (205 aa).

This sequence belongs to the universal ribosomal protein uL4 family. As to quaternary structure, part of the 50S ribosomal subunit.

One of the primary rRNA binding proteins, this protein initially binds near the 5'-end of the 23S rRNA. It is important during the early stages of 50S assembly. It makes multiple contacts with different domains of the 23S rRNA in the assembled 50S subunit and ribosome. Its function is as follows. Forms part of the polypeptide exit tunnel. This is Large ribosomal subunit protein uL4 from Ruegeria sp. (strain TM1040) (Silicibacter sp.).